Here is a 371-residue protein sequence, read N- to C-terminus: Deoxyguanosinetriphosphate triphosphohydrolase-like protein (371 aa).

The 139-residue stretch at 62–200 (RITHSIEVAQ…SAISDDIAYN (139 aa)) folds into the HD domain.

Belongs to the dGTPase family. Type 2 subfamily.

The protein is Deoxyguanosinetriphosphate triphosphohydrolase-like protein of Pelagibacter ubique (strain HTCC1062).